The chain runs to 379 residues: Homoserine O-succinyltransferase (379 aa).

In terms of domain architecture, AB hydrolase-1 spans 51 to 360 (NAVLICHALS…DAPQGHDAFL (310 aa)). Serine 157 (nucleophile) is an active-site residue. Arginine 227 contacts substrate. Catalysis depends on residues aspartate 323 and histidine 356. Aspartate 357 contributes to the substrate binding site.

Belongs to the AB hydrolase superfamily. MetX family. Homodimer.

Its subcellular location is the cytoplasm. The catalysed reaction is L-homoserine + succinyl-CoA = O-succinyl-L-homoserine + CoA. The protein operates within amino-acid biosynthesis; L-methionine biosynthesis via de novo pathway; O-succinyl-L-homoserine from L-homoserine: step 1/1. Transfers a succinyl group from succinyl-CoA to L-homoserine, forming succinyl-L-homoserine. The protein is Homoserine O-succinyltransferase of Pseudomonas aeruginosa (strain UCBPP-PA14).